Reading from the N-terminus, the 432-residue chain is C(50) beta-cyclic carotenoids biosynthesis protein LbtBC (432 aa).

The beta-cyclase stretch occupies residues 1–140 (MTSLYTTLNL…DDDEVRTPER (140 aa)). Helical transmembrane passes span 4-24 (LYTT…LLAA), 36-56 (LIGV…FDNI), and 83-103 (FAYA…LTAS). Positions 111–140 (GSPTVSGRGDALLTRAPEPGDDDEVRTPER) are disordered. Positions 141–432 (PGTPGLLTTL…IVLWSVLVWS (292 aa)) are elongase/hydratase. Transmembrane regions (helical) follow at residues 170-190 (YFLA…FFLV), 252-272 (ESSL…AKGL), 277-297 (IPFL…IVGW), 299-319 (IAGA…MLWG), 350-370 (AAVW…LAAA), 374-394 (ASGA…YVGV), and 409-429 (FLVL…WSVL).

Belongs to the UbiA prenyltransferase family. As to quaternary structure, may form a complex with LbtA.

It localises to the cell membrane. The catalysed reaction is all-trans-lycopene + dimethylallyl diphosphate + H2O = dihydroisopentenyldehydrorhodopin + diphosphate. The enzyme catalyses isopentenyldehydrorhodopin + dimethylallyl diphosphate + H2O = dihydrobisanhydrobacterioruberin + diphosphate. It functions in the pathway carotenoid biosynthesis. Involved in the biosynthesis of C(50) beta-cyclic carotenoids. The elongase/hydratase domain catalyzes the elongation of lycopene by attaching a C(5) isoprene unit at C-2, as well as the hydroxylation of the previous end of the molecule. The enzyme acts at both ends of the substrate, and catalyzes the conversion of lycopene to the C(45) intermediate dihydroisopentenyldehydrorhodopin (DH-IDR) and the conversion of isopentenyldehydrorhodopin (IDR) to the C(50) carotenoid dihydrobisanhydrobacterioruberin (DH-BABR). The beta-cyclase domain may produce the C(50) beta-cyclic carotenoid C.p.450 from the C(50) carotenoid dihydrobisanhydrobacterioruberin (DH-BABR). In Dietzia sp. (strain CQ4), this protein is C(50) beta-cyclic carotenoids biosynthesis protein LbtBC.